A 321-amino-acid polypeptide reads, in one-letter code: Glucokinase (321 aa).

An ATP-binding site is contributed by 10-15; the sequence is GDIGGT.

It belongs to the bacterial glucokinase family.

The protein localises to the cytoplasm. It carries out the reaction D-glucose + ATP = D-glucose 6-phosphate + ADP + H(+). In Marinobacter nauticus (strain ATCC 700491 / DSM 11845 / VT8) (Marinobacter aquaeolei), this protein is Glucokinase.